Reading from the N-terminus, the 234-residue chain is Small ribosomal subunit protein uS2 (234 aa).

It belongs to the universal ribosomal protein uS2 family.

The polypeptide is Small ribosomal subunit protein uS2 (Prochlorococcus marinus (strain AS9601)).